Reading from the N-terminus, the 616-residue chain is UvrABC system protein C (616 aa).

In terms of domain architecture, GIY-YIG spans 11 to 85 (ASPGVYIFRR…IKQHRPHYNV (75 aa)). One can recognise a UVR domain in the interval 194–229 (APVIARLKADMQAAARAQDFEQAARLRDRVQAVEKL).

The protein belongs to the UvrC family. As to quaternary structure, interacts with UvrB in an incision complex.

It localises to the cytoplasm. Functionally, the UvrABC repair system catalyzes the recognition and processing of DNA lesions. UvrC both incises the 5' and 3' sides of the lesion. The N-terminal half is responsible for the 3' incision and the C-terminal half is responsible for the 5' incision. This Deinococcus geothermalis (strain DSM 11300 / CIP 105573 / AG-3a) protein is UvrABC system protein C.